A 343-amino-acid chain; its full sequence is tRNA N6-adenosine threonylcarbamoyltransferase (343 aa).

Positions 114 and 118 each coordinate Fe cation. Substrate contacts are provided by residues 137-141 (LVSGG), aspartate 171, glycine 184, aspartate 188, and asparagine 278. Residue aspartate 306 coordinates Fe cation.

Belongs to the KAE1 / TsaD family. Fe(2+) serves as cofactor.

It is found in the cytoplasm. The catalysed reaction is L-threonylcarbamoyladenylate + adenosine(37) in tRNA = N(6)-L-threonylcarbamoyladenosine(37) in tRNA + AMP + H(+). Its function is as follows. Required for the formation of a threonylcarbamoyl group on adenosine at position 37 (t(6)A37) in tRNAs that read codons beginning with adenine. Is involved in the transfer of the threonylcarbamoyl moiety of threonylcarbamoyl-AMP (TC-AMP) to the N6 group of A37, together with TsaE and TsaB. TsaD likely plays a direct catalytic role in this reaction. In Acidothermus cellulolyticus (strain ATCC 43068 / DSM 8971 / 11B), this protein is tRNA N6-adenosine threonylcarbamoyltransferase.